Reading from the N-terminus, the 193-residue chain is MLNKKIIKPAGKVATEFENTVAQALVDLENNNAELKDLKDLSVCSVKEVDVAESKKAVVIFVPFRQLKNYNKIQQKLTYEVEKKLGGKQVMFIAQRRIIRKPASNNKIKMQKRPISRTIKAVHDAILDDLVFPNTIVGRRLRYRLDGSKLHKIYLDRKEMLSNISKVDSFSAVYHKLTGKEVVFEFTQQTAEN.

Belongs to the eukaryotic ribosomal protein eS7 family.

The polypeptide is Small ribosomal subunit protein eS7 (rps7) (Dictyostelium discoideum (Social amoeba)).